Reading from the N-terminus, the 225-residue chain is 7-cyano-7-deazaguanine synthase (225 aa).

An ATP-binding site is contributed by 10-20 (VSGGLDSTTVI). Zn(2+) contacts are provided by Cys189, Cys199, Cys202, and Cys205.

Belongs to the QueC family. Requires Zn(2+) as cofactor.

The enzyme catalyses 7-carboxy-7-deazaguanine + NH4(+) + ATP = 7-cyano-7-deazaguanine + ADP + phosphate + H2O + H(+). It participates in purine metabolism; 7-cyano-7-deazaguanine biosynthesis. Catalyzes the ATP-dependent conversion of 7-carboxy-7-deazaguanine (CDG) to 7-cyano-7-deazaguanine (preQ(0)). In Cellvibrio japonicus (strain Ueda107) (Pseudomonas fluorescens subsp. cellulosa), this protein is 7-cyano-7-deazaguanine synthase.